A 357-amino-acid chain; its full sequence is Peptide chain release factor 1 (357 aa).

Gln234 carries the post-translational modification N5-methylglutamine.

Belongs to the prokaryotic/mitochondrial release factor family. Methylated by PrmC. Methylation increases the termination efficiency of RF1.

The protein localises to the cytoplasm. Peptide chain release factor 1 directs the termination of translation in response to the peptide chain termination codons UAG and UAA. In Chlorobaculum tepidum (strain ATCC 49652 / DSM 12025 / NBRC 103806 / TLS) (Chlorobium tepidum), this protein is Peptide chain release factor 1.